The primary structure comprises 174 residues: NADH-quinone oxidoreductase subunit B 2 (174 aa).

Residues Cys-38, Cys-39, Cys-104, and Cys-133 each coordinate [4Fe-4S] cluster.

Belongs to the complex I 20 kDa subunit family. In terms of assembly, NDH-1 is composed of 14 different subunits. Subunits NuoB, C, D, E, F, and G constitute the peripheral sector of the complex. [4Fe-4S] cluster serves as cofactor.

It localises to the cell membrane. It carries out the reaction a quinone + NADH + 5 H(+)(in) = a quinol + NAD(+) + 4 H(+)(out). Its function is as follows. NDH-1 shuttles electrons from NADH, via FMN and iron-sulfur (Fe-S) centers, to quinones in the respiratory chain. The immediate electron acceptor for the enzyme in this species is believed to be ubiquinone. Couples the redox reaction to proton translocation (for every two electrons transferred, four hydrogen ions are translocated across the cytoplasmic membrane), and thus conserves the redox energy in a proton gradient. The chain is NADH-quinone oxidoreductase subunit B 2 from Chloroflexus aurantiacus (strain ATCC 29366 / DSM 635 / J-10-fl).